Reading from the N-terminus, the 602-residue chain is Aspartate--tRNA(Asp/Asn) ligase (602 aa).

Glutamate 191 contacts L-aspartate. The segment at glutamine 215–lysine 218 is aspartate. Arginine 237 contacts L-aspartate. ATP-binding positions include arginine 237–glutamate 239 and glutamine 246. An L-aspartate-binding site is contributed by histidine 465. Glutamate 499 contacts ATP. Arginine 506 is a binding site for L-aspartate. Glycine 551–arginine 554 lines the ATP pocket.

This sequence belongs to the class-II aminoacyl-tRNA synthetase family. Type 1 subfamily. In terms of assembly, homodimer.

The protein resides in the cytoplasm. It catalyses the reaction tRNA(Asx) + L-aspartate + ATP = L-aspartyl-tRNA(Asx) + AMP + diphosphate. Its function is as follows. Aspartyl-tRNA synthetase with relaxed tRNA specificity since it is able to aspartylate not only its cognate tRNA(Asp) but also tRNA(Asn). Reaction proceeds in two steps: L-aspartate is first activated by ATP to form Asp-AMP and then transferred to the acceptor end of tRNA(Asp/Asn). In Treponema pallidum (strain Nichols), this protein is Aspartate--tRNA(Asp/Asn) ligase.